The sequence spans 146 residues: 3-hydroxyacyl-[acyl-carrier-protein] dehydratase FabZ (146 aa).

Residue His49 is part of the active site.

Belongs to the thioester dehydratase family. FabZ subfamily.

The protein localises to the cytoplasm. It catalyses the reaction a (3R)-hydroxyacyl-[ACP] = a (2E)-enoyl-[ACP] + H2O. Functionally, involved in unsaturated fatty acids biosynthesis. Catalyzes the dehydration of short chain beta-hydroxyacyl-ACPs and long chain saturated and unsaturated beta-hydroxyacyl-ACPs. This is 3-hydroxyacyl-[acyl-carrier-protein] dehydratase FabZ from Ectopseudomonas mendocina (strain ymp) (Pseudomonas mendocina).